The chain runs to 197 residues: Xanthine phosphoribosyltransferase (197 aa).

Positions 20 and 27 each coordinate xanthine. Position 128-132 (128-132) interacts with 5-phospho-alpha-D-ribose 1-diphosphate; sequence ANGQA. K156 contacts xanthine.

The protein belongs to the purine/pyrimidine phosphoribosyltransferase family. Xpt subfamily. In terms of assembly, homodimer.

The protein resides in the cytoplasm. The enzyme catalyses XMP + diphosphate = xanthine + 5-phospho-alpha-D-ribose 1-diphosphate. The protein operates within purine metabolism; XMP biosynthesis via salvage pathway; XMP from xanthine: step 1/1. Its function is as follows. Converts the preformed base xanthine, a product of nucleic acid breakdown, to xanthosine 5'-monophosphate (XMP), so it can be reused for RNA or DNA synthesis. The protein is Xanthine phosphoribosyltransferase of Bacillus cytotoxicus (strain DSM 22905 / CIP 110041 / 391-98 / NVH 391-98).